We begin with the raw amino-acid sequence, 438 residues long: MNTIFSRITPLGNGTLCVIRISGKNVKFLIQKIVKKNIKEKIATFSKLFLDKECVDYAMIIFFKKPNTFTGEDIIEFHIHNNETIVKKIINYLLLNKARFAKAGEFLERRYLNGKISLIECELINNKILYDNENMFQLTKNSEKKIFLCIIKNLKFKINSLIICIEIANFNFSFFFFNDFLFIKYTFKKLLKLLKILIDKITVINYLKKNFTIMILGRRNVGKSTLFNKICAQYDSIVTNIPGTTKNIISKKIKILSKKIKMMDTAGLKIRTKNLIEKIGIIKNINKIYQGNLILYMIDKFNIKNIFFNIPIDFIDKIKLNELIILVNKSDILGKEEGVFKIKNILIILISSKNGTFIKNLKCFINKIVDNKDFSKNNYSDVKILFNKFSFFYKEFSCNYDLVLSKLIDFQKNIFKLTGNFTNKKIINSCFRNFCIGK.

Residues Arg-20, Glu-76, and Lys-115 each contribute to the (6S)-5-formyl-5,6,7,8-tetrahydrofolate site. The TrmE-type G domain maps to 210–370 (NFTIMILGRR…LKCFINKIVD (161 aa)). Asn-220 lines the K(+) pocket. Residues 220–225 (NVGKST), 239–245 (TNIPGTT), and 264–267 (DTAG) each bind GTP. Ser-224 lines the Mg(2+) pocket. Positions 239, 241, and 244 each coordinate K(+). Position 245 (Thr-245) interacts with Mg(2+). Residue Lys-438 coordinates (6S)-5-formyl-5,6,7,8-tetrahydrofolate.

The protein belongs to the TRAFAC class TrmE-Era-EngA-EngB-Septin-like GTPase superfamily. TrmE GTPase family. Homodimer. Heterotetramer of two MnmE and two MnmG subunits. It depends on K(+) as a cofactor.

It localises to the cytoplasm. Functionally, exhibits a very high intrinsic GTPase hydrolysis rate. Involved in the addition of a carboxymethylaminomethyl (cmnm) group at the wobble position (U34) of certain tRNAs, forming tRNA-cmnm(5)s(2)U34. The sequence is that of tRNA modification GTPase MnmE from Carsonella ruddii (strain PV).